The chain runs to 238 residues: MNNDLTADSIIEMISSSKKKTPVIAYVKGHLSDIDMSGVQFFGTDNFGIIFADYEDLRQFLEKNGNKIHDVHIEAKARNSALPMADITKFNARVEPGAVIRDLVKIGDGAVIMMGAIINVGAVIGEKTMIDMNAVIGGRAIIGRNCHIGAGAVIAGVIEPPSATPVVIEDNVMVGANAVVLEGVKVGKGSVVAAGAVVVSDVDPYTVVAGIPAKFIKKVDEKTIEKTKIIEILRQRDH.

Belongs to the transferase hexapeptide repeat family. DapH subfamily.

It catalyses the reaction (S)-2,3,4,5-tetrahydrodipicolinate + acetyl-CoA + H2O = L-2-acetamido-6-oxoheptanedioate + CoA. It functions in the pathway amino-acid biosynthesis; L-lysine biosynthesis via DAP pathway; LL-2,6-diaminopimelate from (S)-tetrahydrodipicolinate (acetylase route): step 1/3. Catalyzes the transfer of an acetyl group from acetyl-CoA to tetrahydrodipicolinate. In Pseudothermotoga lettingae (strain ATCC BAA-301 / DSM 14385 / NBRC 107922 / TMO) (Thermotoga lettingae), this protein is 2,3,4,5-tetrahydropyridine-2,6-dicarboxylate N-acetyltransferase.